Here is a 361-residue protein sequence, read N- to C-terminus: Nicotinate-nucleotide--dimethylbenzimidazole phosphoribosyltransferase (361 aa).

The Proton acceptor role is filled by Glu314.

This sequence belongs to the CobT family.

The catalysed reaction is 5,6-dimethylbenzimidazole + nicotinate beta-D-ribonucleotide = alpha-ribazole 5'-phosphate + nicotinate + H(+). It functions in the pathway nucleoside biosynthesis; alpha-ribazole biosynthesis; alpha-ribazole from 5,6-dimethylbenzimidazole: step 1/2. In terms of biological role, catalyzes the synthesis of alpha-ribazole-5'-phosphate from nicotinate mononucleotide (NAMN) and 5,6-dimethylbenzimidazole (DMB). This is Nicotinate-nucleotide--dimethylbenzimidazole phosphoribosyltransferase from Mycobacterium bovis (strain BCG / Pasteur 1173P2).